Reading from the N-terminus, the 332-residue chain is Glycerol-3-phosphate dehydrogenase [NAD(P)+] (332 aa).

Residues Ser-11, Phe-12, Lys-32, and Lys-106 each coordinate NADPH. The sn-glycerol 3-phosphate site is built by Lys-106, Gly-137, and Ser-139. Ala-141 contacts NADPH. Positions 192, 245, 255, 256, and 257 each coordinate sn-glycerol 3-phosphate. Lys-192 functions as the Proton acceptor in the catalytic mechanism. Arg-256 provides a ligand contact to NADPH. 2 residues coordinate NADPH: Val-280 and Glu-282.

This sequence belongs to the NAD-dependent glycerol-3-phosphate dehydrogenase family.

The protein localises to the cytoplasm. It catalyses the reaction sn-glycerol 3-phosphate + NAD(+) = dihydroxyacetone phosphate + NADH + H(+). The catalysed reaction is sn-glycerol 3-phosphate + NADP(+) = dihydroxyacetone phosphate + NADPH + H(+). It functions in the pathway membrane lipid metabolism; glycerophospholipid metabolism. In terms of biological role, catalyzes the reduction of the glycolytic intermediate dihydroxyacetone phosphate (DHAP) to sn-glycerol 3-phosphate (G3P), the key precursor for phospholipid synthesis. The sequence is that of Glycerol-3-phosphate dehydrogenase [NAD(P)+] from Staphylococcus epidermidis (strain ATCC 12228 / FDA PCI 1200).